A 100-amino-acid polypeptide reads, in one-letter code: NADH-quinone oxidoreductase subunit K 2 (100 aa).

3 helical membrane-spanning segments follow: residues 4-24, 28-48, and 60-80; these read LWWFIVLGVVLFVIGAAGVLL, ILVVLMSLELLLNSVNINFIA, and IFAIFVIAITAAEVAVALGIL.

Belongs to the complex I subunit 4L family. As to quaternary structure, NDH-1 is composed of 14 different subunits. Subunits NuoA, H, J, K, L, M, N constitute the membrane sector of the complex.

Its subcellular location is the cell inner membrane. The catalysed reaction is a quinone + NADH + 5 H(+)(in) = a quinol + NAD(+) + 4 H(+)(out). Functionally, NDH-1 shuttles electrons from NADH, via FMN and iron-sulfur (Fe-S) centers, to quinones in the respiratory chain. The immediate electron acceptor for the enzyme in this species is believed to be ubiquinone. Couples the redox reaction to proton translocation (for every two electrons transferred, four hydrogen ions are translocated across the cytoplasmic membrane), and thus conserves the redox energy in a proton gradient. The chain is NADH-quinone oxidoreductase subunit K 2 from Rhizobium etli (strain CIAT 652).